The chain runs to 186 residues: Inosine/xanthosine triphosphatase (186 aa).

Residue Gln-75 coordinates Mg(2+).

Belongs to the YjjX NTPase family. Homodimer. Mg(2+) serves as cofactor. It depends on Mn(2+) as a cofactor.

It carries out the reaction XTP + H2O = XDP + phosphate + H(+). It catalyses the reaction ITP + H2O = IDP + phosphate + H(+). Phosphatase that hydrolyzes non-canonical purine nucleotides such as XTP and ITP to their respective diphosphate derivatives. Probably excludes non-canonical purines from DNA/RNA precursor pool, thus preventing their incorporation into DNA/RNA and avoiding chromosomal lesions. The sequence is that of Inosine/xanthosine triphosphatase from Shewanella baltica (strain OS195).